We begin with the raw amino-acid sequence, 207 residues long: MKSNLHGLYLVTPDWDDTRKLLEITELALKGGVSLLQYRHKTADAALRQEQAECLQALCRSYEVPFIINDHIDLCLGINADGIHVGGTDKSVAEVRAIIGPDKILGSSCYGDLALAHAAEAAGASYVAFGGFYPSKVKKYPVTTAPTIVSDWKAQGKVPSCVIGGMTRDNSAPLVANGADMVAAISSVYLAGDPQAAARAFVSLFAK.

4-amino-2-methyl-5-(diphosphooxymethyl)pyrimidine-binding positions include 37–41 (QYRHK) and asparagine 69. 2 residues coordinate Mg(2+): aspartate 70 and aspartate 89. Residues serine 108 and lysine 138 each contribute to the 4-amino-2-methyl-5-(diphosphooxymethyl)pyrimidine site. 2-[(2R,5Z)-2-carboxy-4-methylthiazol-5(2H)-ylidene]ethyl phosphate contacts are provided by residues glycine 165 and 185–186 (IS).

It belongs to the thiamine-phosphate synthase family. Mg(2+) is required as a cofactor.

The enzyme catalyses 2-[(2R,5Z)-2-carboxy-4-methylthiazol-5(2H)-ylidene]ethyl phosphate + 4-amino-2-methyl-5-(diphosphooxymethyl)pyrimidine + 2 H(+) = thiamine phosphate + CO2 + diphosphate. The catalysed reaction is 2-(2-carboxy-4-methylthiazol-5-yl)ethyl phosphate + 4-amino-2-methyl-5-(diphosphooxymethyl)pyrimidine + 2 H(+) = thiamine phosphate + CO2 + diphosphate. It carries out the reaction 4-methyl-5-(2-phosphooxyethyl)-thiazole + 4-amino-2-methyl-5-(diphosphooxymethyl)pyrimidine + H(+) = thiamine phosphate + diphosphate. The protein operates within cofactor biosynthesis; thiamine diphosphate biosynthesis; thiamine phosphate from 4-amino-2-methyl-5-diphosphomethylpyrimidine and 4-methyl-5-(2-phosphoethyl)-thiazole: step 1/1. In terms of biological role, condenses 4-methyl-5-(beta-hydroxyethyl)thiazole monophosphate (THZ-P) and 2-methyl-4-amino-5-hydroxymethyl pyrimidine pyrophosphate (HMP-PP) to form thiamine monophosphate (TMP). The chain is Thiamine-phosphate synthase from Janthinobacterium sp. (strain Marseille) (Minibacterium massiliensis).